Consider the following 920-residue polypeptide: Vacuolar membrane protease (920 aa).

The Cytoplasmic portion of the chain corresponds to 1 to 20; sequence MASSRAQRFNPIAFTPWPVT. A helical transmembrane segment spans residues 21–41; the sequence is CITTIVYLALLIPILVINLVV. The Vacuolar portion of the chain corresponds to 42–378; it reads PSAPETNPKG…AFAVFRLHTL (337 aa). N-linked (GlcNAc...) asparagine glycosylation is found at asparagine 53, asparagine 116, and asparagine 119. Positions 175 and 187 each coordinate Zn(2+). The active-site Proton acceptor is glutamate 221. Position 222 (glutamate 222) interacts with Zn(2+). A glycan (N-linked (GlcNAc...) asparagine) is linked at asparagine 238. Zn(2+) contacts are provided by glutamate 247 and histidine 306. A helical membrane pass occupies residues 379-399; it reads FAISVALLVIAPLVIFITSVI. Residues 400–433 lie on the Cytoplasmic side of the membrane; that stretch reads LSKTDRMYLFSMSKSLEGTGDQVSLRGLRGFSRT. Residues 434–454 form a helical membrane-spanning segment; it reads PIILVIATTIPICLAYLLEKV. At 455–463 the chain is on the vacuolar side; it reads NPYIVHSSQ. A helical transmembrane segment spans residues 464-484; it reads FSVWSMMFSAWIFLAWFLACA. The Cytoplasmic segment spans residues 485–495; sequence ADFFRPSALHR. Residues 496–516 form a helical membrane-spanning segment; it reads AYSYTWIFVATWIMLVINTVY. Topologically, residues 517–520 are vacuolar; the sequence is ANQK. A helical membrane pass occupies residues 521–541; sequence GIAAGYFLLFYFAGAFLATWI. The Cytoplasmic portion of the chain corresponds to 542–659; sequence SYLELFALPR…TLPRWTWVLQ (118 aa). The interval 556-605 is disordered; sequence ARQTTGRRPSSLSSRLLTSSADELRSNASPSTAEFPGAAGEDTDPTESTS. A compositionally biased stretch (low complexity) spans 559-575; that stretch reads TTGRRPSSLSSRLLTSS. Residues 660-680 traverse the membrane as a helical segment; that stretch reads LLLLAPIVLILVGQLALFLTA. At 681–693 the chain is on the vacuolar side; the sequence is SMCQVGSDGVSTF. A helical transmembrane segment spans residues 694–714; it reads VVYLACAVFTTLLCIPLFPLI. At 715–720 the chain is on the cytoplasmic side; sequence HRFTYH. The helical transmembrane segment at 721-741 threads the bilayer; that stretch reads IPTFLFLVFIGTLIYNLVAFP. Topologically, residues 742–920 are vacuolar; the sequence is FSPANRLKTF…VEASHSFTIQ (179 aa). Residues asparagine 760, asparagine 788, and asparagine 832 are each glycosylated (N-linked (GlcNAc...) asparagine).

It belongs to the peptidase M28 family. Zn(2+) is required as a cofactor.

It localises to the vacuole membrane. Functionally, may be involved in vacuolar sorting and osmoregulation. In Ajellomyces capsulatus (strain H143) (Darling's disease fungus), this protein is Vacuolar membrane protease.